The primary structure comprises 369 residues: Quinolinate synthase (369 aa).

Positions 47 and 64 each coordinate iminosuccinate. Residue cysteine 111 participates in [4Fe-4S] cluster binding. Residues 142–144 (YVN) and serine 163 contribute to the iminosuccinate site. Position 231 (cysteine 231) interacts with [4Fe-4S] cluster. Iminosuccinate contacts are provided by residues 257–259 (HPE) and threonine 274. Cysteine 321 contacts [4Fe-4S] cluster.

The protein belongs to the quinolinate synthase family. Type 3 subfamily. The cofactor is [4Fe-4S] cluster.

It is found in the cytoplasm. The catalysed reaction is iminosuccinate + dihydroxyacetone phosphate = quinolinate + phosphate + 2 H2O + H(+). It participates in cofactor biosynthesis; NAD(+) biosynthesis; quinolinate from iminoaspartate: step 1/1. Functionally, catalyzes the condensation of iminoaspartate with dihydroxyacetone phosphate to form quinolinate. The sequence is that of Quinolinate synthase from Bacillus pumilus (strain SAFR-032).